Consider the following 61-residue polypeptide: Small ribosomal subunit protein uS14B (61 aa).

Cysteine 24, cysteine 27, cysteine 40, and cysteine 43 together coordinate Zn(2+).

Belongs to the universal ribosomal protein uS14 family. Zinc-binding uS14 subfamily. In terms of assembly, part of the 30S ribosomal subunit. Contacts proteins S3 and S10. Zn(2+) is required as a cofactor.

Its function is as follows. Binds 16S rRNA, required for the assembly of 30S particles and may also be responsible for determining the conformation of the 16S rRNA at the A site. The sequence is that of Small ribosomal subunit protein uS14B from Lactococcus lactis subsp. lactis (strain IL1403) (Streptococcus lactis).